The chain runs to 116 residues: Large ribosomal subunit protein bL17 (116 aa).

It belongs to the bacterial ribosomal protein bL17 family. Part of the 50S ribosomal subunit. Contacts protein L32.

The sequence is that of Large ribosomal subunit protein bL17 from Prochlorococcus marinus (strain MIT 9215).